A 341-amino-acid polypeptide reads, in one-letter code: Syntaxin-122 (341 aa).

Met-1 is subject to N-acetylmethionine. 2 disordered regions span residues 1–22 (MNDL…PPHS) and 111–137 (LDRA…RTSV). Residues 1–284 (MNDLLSGSFK…ARFYQKNTRK (284 aa)) are Cytoplasmic-facing. Composition is skewed to polar residues over residues 8–21 (SFKT…SPPH) and 126–137 (PGSSSDRQRTSV). The stretch at 64 to 185 (CHNLRSSNEQ…GEYPDEATLE (122 aa)) forms a coiled coil. Residues 213–275 (INEIQERHDA…RSGADRLVKA (63 aa)) enclose the t-SNARE coiled-coil homology domain. A helical; Anchor for type IV membrane protein membrane pass occupies residues 285–305 (WTCFAILLLLIIVVLIVVFTV). Residues 306 to 341 (KPWESNGGGGGGAPRQATPVQAQPPPPPAVNRRLLR) lie on the Vesicular side of the membrane. The tract at residues 312–341 (GGGGGGAPRQATPVQAQPPPPPAVNRRLLR) is disordered.

This sequence belongs to the syntaxin family. In terms of assembly, part of the t-SNARE complex.

It is found in the membrane. In terms of biological role, vesicle trafficking protein that functions in the secretory pathway. This Arabidopsis thaliana (Mouse-ear cress) protein is Syntaxin-122 (SYP122).